The sequence spans 465 residues: Cytochrome P450 85A2 (465 aa).

The chain crosses the membrane as a helical span at residues 2 to 22 (GIMMMILGLLVIIVCLCTALL). Cys-415 lines the heme pocket. Cys-462 is lipidated: S-farnesyl cysteine. The Farnesylation CAAX motif signature appears at 462–465 (CSPY).

Belongs to the cytochrome P450 family. It depends on heme as a cofactor. Post-translationally, isoprenylated (farnesylated); this addition of a 15-carbon farnesyl isoprenoid to the carboxy terminus is required for endoplasmic reticulum localization and essential for the biosynthesis of brassinolide. As to expression, expressed in stems, hypocotyls, leaves, siliques, shoots, and roots, with a higher expression in apical shoots.

It localises to the membrane. Its subcellular location is the endoplasmic reticulum. The enzyme catalyses 6-deoxoteasterone + reduced [NADPH--hemoprotein reductase] + O2 = 6alpha-hydroxyteasterone + oxidized [NADPH--hemoprotein reductase] + H2O + H(+). It carries out the reaction 6alpha-hydroxytyphasterol + reduced [NADPH--hemoprotein reductase] + O2 = teasterone + oxidized [NADPH--hemoprotein reductase] + 2 H2O + H(+). It catalyses the reaction 3-dehydro-6-deoxoteasterone + reduced [NADPH--hemoprotein reductase] + O2 = 3-dehydro-6alpha-hydroxyteasterone + oxidized [NADPH--hemoprotein reductase] + H2O + H(+). The catalysed reaction is 3-dehydro-6alpha-hydroxyteasterone + reduced [NADPH--hemoprotein reductase] + O2 = 3-dehydroteasterone + oxidized [NADPH--hemoprotein reductase] + 2 H2O + H(+). The enzyme catalyses 6-deoxotyphasterol + reduced [NADPH--hemoprotein reductase] + O2 = 6alpha-hydroxytyphasterol + oxidized [NADPH--hemoprotein reductase] + H2O + H(+). It carries out the reaction 6alpha-hydroxytyphasterol + reduced [NADPH--hemoprotein reductase] + O2 = typhasterol + oxidized [NADPH--hemoprotein reductase] + 2 H2O + H(+). It catalyses the reaction 6-deoxocastasterone + reduced [NADPH--hemoprotein reductase] + O2 = 6alpha-hydroxycastasterone + oxidized [NADPH--hemoprotein reductase] + H2O + H(+). The catalysed reaction is 6alpha-hydroxycastasterone + reduced [NADPH--hemoprotein reductase] + O2 = castasterone + oxidized [NADPH--hemoprotein reductase] + 2 H2O + H(+). The enzyme catalyses 6-deoxo-28-norteasterone + 2 reduced [NADPH--hemoprotein reductase] + 2 O2 = 28-norteasterone + 2 oxidized [NADPH--hemoprotein reductase] + 3 H2O + 2 H(+). It carries out the reaction 6-deoxo-28-norteasterone + reduced [NADPH--hemoprotein reductase] + O2 = 6alpha-hydroxy-28-norteasterone + oxidized [NADPH--hemoprotein reductase] + H2O + H(+). It catalyses the reaction 6alpha-hydroxy-28-norteasterone + reduced [NADPH--hemoprotein reductase] + O2 = 28-norteasterone + oxidized [NADPH--hemoprotein reductase] + 2 H2O + H(+). The catalysed reaction is 6-deoxo-28-nortyphasterol + 2 reduced [NADPH--hemoprotein reductase] + 2 O2 = 28-nortyphasterol + 2 oxidized [NADPH--hemoprotein reductase] + 3 H2O + 2 H(+). The enzyme catalyses 6-deoxo-28-nortyphasterol + reduced [NADPH--hemoprotein reductase] + O2 = 6alpha-hydroxy-28-nortyphasterol + oxidized [NADPH--hemoprotein reductase] + H2O + H(+). It carries out the reaction 6alpha-hydroxy-28-nortyphasterol + reduced [NADPH--hemoprotein reductase] + O2 = 28-nortyphasterol + oxidized [NADPH--hemoprotein reductase] + 2 H2O + H(+). It catalyses the reaction 6-deoxo-28-norcastasterone + 2 reduced [NADPH--hemoprotein reductase] + 2 O2 = 28-norcastasterone + 2 oxidized [NADPH--hemoprotein reductase] + 3 H2O + 2 H(+). The catalysed reaction is 6-deoxo-28-norcastasterone + reduced [NADPH--hemoprotein reductase] + O2 = 6alpha-hydroxy-28-norcastasterone + oxidized [NADPH--hemoprotein reductase] + H2O + H(+). The enzyme catalyses 6alpha-hydroxy-28-norcastasterone + reduced [NADPH--hemoprotein reductase] + O2 = 28-norcastasterone + oxidized [NADPH--hemoprotein reductase] + 2 H2O + H(+). It carries out the reaction 3-dehydro-6-deoxo-28-norteasterone + 2 reduced [NADPH--hemoprotein reductase] + 2 O2 = 6-dehydro-28-norteasterone + 2 oxidized [NADPH--hemoprotein reductase] + 3 H2O + 2 H(+). It catalyses the reaction 3-dehydro-6-deoxo-28-norteasterone + reduced [NADPH--hemoprotein reductase] + O2 = 3-dehydro-6alpha-hydroxy-28-norteasterone + oxidized [NADPH--hemoprotein reductase] + H2O + H(+). The catalysed reaction is 3-dehydro-6alpha-hydroxy-28-norteasterone + reduced [NADPH--hemoprotein reductase] + O2 = 6-dehydro-28-norteasterone + oxidized [NADPH--hemoprotein reductase] + 2 H2O + H(+). The enzyme catalyses teasterone + reduced [NADPH--hemoprotein reductase] + O2 = 7-oxateasterone + oxidized [NADPH--hemoprotein reductase] + H2O + H(+). It carries out the reaction castasterone + reduced [NADPH--hemoprotein reductase] + O2 = brassinolide + oxidized [NADPH--hemoprotein reductase] + H2O + H(+). It catalyses the reaction typhasterol + reduced [NADPH--hemoprotein reductase] + O2 = 7-oxatyphasterol + oxidized [NADPH--hemoprotein reductase] + H2O + H(+). The catalysed reaction is 6-deoxocastasterone + 2 reduced [NADPH--hemoprotein reductase] + 2 O2 = castasterone + 2 oxidized [NADPH--hemoprotein reductase] + 3 H2O + 2 H(+). The enzyme catalyses 6-deoxoteasterone + 2 reduced [NADPH--hemoprotein reductase] + 2 O2 = teasterone + 2 oxidized [NADPH--hemoprotein reductase] + 3 H2O + 2 H(+). It carries out the reaction 6-deoxotyphasterol + 2 reduced [NADPH--hemoprotein reductase] + 2 O2 = typhasterol + 2 oxidized [NADPH--hemoprotein reductase] + 3 H2O + 2 H(+). It catalyses the reaction 3-dehydro-6-deoxoteasterone + 2 reduced [NADPH--hemoprotein reductase] + 2 O2 = 3-dehydroteasterone + 2 oxidized [NADPH--hemoprotein reductase] + 3 H2O + 2 H(+). Its pathway is plant hormone biosynthesis; brassinosteroid biosynthesis. In terms of biological role, mediates Baeyer-Villiger oxidation and catalyzes the C6-oxidation step and lactonization in brassinosteroids biosynthesis. Converts 6-deoxocastasterone (6-deoxoCS) to castasterone (CS), and castasterone to brassinolide (BL). May also convert 6-deoxoteasterone (6-deoxoTE) to teasterone (TE), 3-dehydro-6-deoxoteasterone (6-deoxo3DT, 6-deoxo-3-DHT) to 3-dehydroteasterone (3DT, 3-DHT), and 6-deoxotyphasterol (6-deoxoTY) to typhasterol (TY). Also seems to be able to convert teasterone (TE) and typhasterol (TY) to 7-oxateasterone (7-OXTE) and 7-oxatyphasterol (7-OXTY), respectively. Catalyzes the conversion of 6-deoxo-28-norteasterone (6-deoxo-28-norTE) to 28-norteasterone (28-norTE), 6-deoxo-28-nordeoxoteasterone (6-deoxo-28-nor-3-DHT) to 28-nordeoxoteasterone (28-nor-3-DHT), 6-deoxo-28-nortyphasterol (6-deoxo-28-norTY) to 28-nortyphasterol (28-norTY) and 6-deoxo-28-norcastasterone (6-deoxo-28-norCS) to 28-norcastasterone (28-norCS). Involved in a negative regulation of responses to abscisic acid (ABA) and drought tolerance. This chain is Cytochrome P450 85A2 (CYP85A2), found in Arabidopsis thaliana (Mouse-ear cress).